We begin with the raw amino-acid sequence, 275 residues long: Dermonecrotic toxin SpeSicTox-betaIIA3ii (275 aa).

His5 is an active-site residue. Residues Glu25 and Asp27 each contribute to the Mg(2+) site. His41 (nucleophile) is an active-site residue. 2 disulfides stabilise this stretch: Cys45–Cys51 and Cys47–Cys190. Asp85 lines the Mg(2+) pocket.

The protein belongs to the arthropod phospholipase D family. Class II subfamily. Requires Mg(2+) as cofactor. Expressed by the venom gland.

It localises to the secreted. It catalyses the reaction an N-(acyl)-sphingosylphosphocholine = an N-(acyl)-sphingosyl-1,3-cyclic phosphate + choline. The catalysed reaction is an N-(acyl)-sphingosylphosphoethanolamine = an N-(acyl)-sphingosyl-1,3-cyclic phosphate + ethanolamine. The enzyme catalyses a 1-acyl-sn-glycero-3-phosphocholine = a 1-acyl-sn-glycero-2,3-cyclic phosphate + choline. It carries out the reaction a 1-acyl-sn-glycero-3-phosphoethanolamine = a 1-acyl-sn-glycero-2,3-cyclic phosphate + ethanolamine. Its function is as follows. Dermonecrotic toxins cleave the phosphodiester linkage between the phosphate and headgroup of certain phospholipids (sphingolipid and lysolipid substrates), forming an alcohol (often choline) and a cyclic phosphate. This toxin acts on sphingomyelin (SM). It may also act on ceramide phosphoethanolamine (CPE), lysophosphatidylcholine (LPC) and lysophosphatidylethanolamine (LPE), but not on lysophosphatidylserine (LPS), and lysophosphatidylglycerol (LPG). It acts by transphosphatidylation, releasing exclusively cyclic phosphate products as second products. Induces dermonecrosis, hemolysis, increased vascular permeability, edema, inflammatory response, and platelet aggregation. The chain is Dermonecrotic toxin SpeSicTox-betaIIA3ii from Sicarius peruensis (Six-eyed sand spider).